Here is a 163-residue protein sequence, read N- to C-terminus: Neurotrophin-3 (163 aa).

Positions 1-3 (IQS) are cleaved as a signal peptide. A propeptide spanning residues 4-119 (TSMDQGILTE…VLNRTSRRKR (116 aa)) is cleaved from the precursor. The N-linked (GlcNAc...) asparagine glycan is linked to N112. Residues 112–132 (NRTSRRKREGKSHRGEYSVCD) are disordered. Positions 123-132 (SHRGEYSVCD) are enriched in basic and acidic residues.

The protein belongs to the NGF-beta family.

Its subcellular location is the secreted. Its function is as follows. Seems to promote the survival of visceral and proprioceptive sensory neurons. This chain is Neurotrophin-3 (NTF3), found in Exiliboa placata (Oaxacan dwarf boa).